The following is a 224-amino-acid chain: MTRVSEEAMKDLLSVYFIMGSNNTAGDPLTVIEKALKGGATLFQFREKGEGALKAGDQTAFARQVQALCKQFNVPFIINDDVELALELDADGVHIGQDDDKAADVRARIGDKILGVSAHTLEEVLKAEKDGADYIGAGPVYPTETKRDTKAVQGVSLIQEIRRQGIGIPVVGIGGITVENCVPVIEAGADGISVISAISKAADPKQAAEAFSEKVQATKQSAHS.

4-amino-2-methyl-5-(diphosphooxymethyl)pyrimidine contacts are provided by residues 44-48 (QFREK) and N79. Positions 80 and 99 each coordinate Mg(2+). S117 provides a ligand contact to 4-amino-2-methyl-5-(diphosphooxymethyl)pyrimidine. 143–145 (TET) provides a ligand contact to 2-[(2R,5Z)-2-carboxy-4-methylthiazol-5(2H)-ylidene]ethyl phosphate. K146 is a 4-amino-2-methyl-5-(diphosphooxymethyl)pyrimidine binding site. 2-[(2R,5Z)-2-carboxy-4-methylthiazol-5(2H)-ylidene]ethyl phosphate is bound by residues G175 and 195–196 (IS).

The protein belongs to the thiamine-phosphate synthase family. Requires Mg(2+) as cofactor.

It carries out the reaction 2-[(2R,5Z)-2-carboxy-4-methylthiazol-5(2H)-ylidene]ethyl phosphate + 4-amino-2-methyl-5-(diphosphooxymethyl)pyrimidine + 2 H(+) = thiamine phosphate + CO2 + diphosphate. The catalysed reaction is 2-(2-carboxy-4-methylthiazol-5-yl)ethyl phosphate + 4-amino-2-methyl-5-(diphosphooxymethyl)pyrimidine + 2 H(+) = thiamine phosphate + CO2 + diphosphate. It catalyses the reaction 4-methyl-5-(2-phosphooxyethyl)-thiazole + 4-amino-2-methyl-5-(diphosphooxymethyl)pyrimidine + H(+) = thiamine phosphate + diphosphate. The protein operates within cofactor biosynthesis; thiamine diphosphate biosynthesis; thiamine phosphate from 4-amino-2-methyl-5-diphosphomethylpyrimidine and 4-methyl-5-(2-phosphoethyl)-thiazole: step 1/1. Its function is as follows. Condenses 4-methyl-5-(beta-hydroxyethyl)thiazole monophosphate (THZ-P) and 2-methyl-4-amino-5-hydroxymethyl pyrimidine pyrophosphate (HMP-PP) to form thiamine monophosphate (TMP). This chain is Thiamine-phosphate synthase, found in Bacillus licheniformis (strain ATCC 14580 / DSM 13 / JCM 2505 / CCUG 7422 / NBRC 12200 / NCIMB 9375 / NCTC 10341 / NRRL NRS-1264 / Gibson 46).